The sequence spans 119 residues: MARFVAVALLVLLSLSGLETIQHAPKIQVYSRHPAENGKPNFLNCYVSGFHPSDIEVDLLKNGKKIEKVEHSDLSFSKDWSFYLLYYTEFTPNEKDEYACRVSHVTFSTPKTVKWDRNM.

The signal sequence occupies residues 1–20 (MARFVAVALLVLLSLSGLET). Residues 25 to 114 (PKIQVYSRHP…VTFSTPKTVK (90 aa)) enclose the Ig-like C1-type domain. Cys45 and Cys100 form a disulfide bridge.

The protein belongs to the beta-2-microglobulin family. As to quaternary structure, heterodimer of an alpha chain and a beta chain. Beta-2-microglobulin is the beta-chain of major histocompatibility complex class I molecules.

The protein localises to the secreted. In terms of biological role, component of the class I major histocompatibility complex (MHC). Involved in the presentation of peptide antigens to the immune system. The sequence is that of Beta-2-microglobulin (B2M) from Callicebus personatus personatus (Masked titi).